A 224-amino-acid polypeptide reads, in one-letter code: CDP-diacylglycerol--inositol 3-phosphatidyltransferase (224 aa).

Over 1-8 the chain is Cytoplasmic; the sequence is MTIAEHDN. A helical membrane pass occupies residues 9-29; the sequence is VFIFVPNLIGYARIVLALIAF. The Lumenal portion of the chain corresponds to 30–35; sequence WFMSTN. The chain crosses the membrane as a helical span at residues 36–52; that stretch reads YVISGWCYVTSALLDAV. Mg(2+) contacts are provided by Asp-50 and Asp-53. Topologically, residues 53–76 are cytoplasmic; sequence DGQAARAFNQSTRFGAMLDQLTDR. A CDP-1,2-diacyl-sn-glycerol is bound by residues Gly-54, Arg-58, and Thr-64. Mg(2+) is bound by residues Asp-71 and Asp-75. Asp-75 functions as the Proton acceptor in the catalytic mechanism. A helical membrane pass occupies residues 77–97; it reads CGTTGLLVTLAYFYPRYMFWF. Position 98 (Gln-98) is a topological domain, lumenal. The chain crosses the membrane as a helical span at residues 99-119; that stretch reads LSIAIDVACHWLFMQTSVVVG. Residues 120–138 lie on the Cytoplasmic side of the membrane; it reads RSSHKVNDNFIMRLYYQKD. A helical transmembrane segment spans residues 139-159; that stretch reads ILTFMCCVNELFYVCLYLLHF. Over 160–163 the chain is Lumenal; that stretch reads TYGP. The helical transmembrane segment at 164 to 184 threads the bilayer; sequence LIFGASLFKILAFLTGPFAVL. Topologically, residues 185-224 are cytoplasmic; the sequence is KALISVMHAYVAGIDLAAVDVRERQERRQKSEPVSGKKVE.

This sequence belongs to the CDP-alcohol phosphatidyltransferase class-I family. The cofactor is Mn(2+). Mg(2+) is required as a cofactor. In terms of tissue distribution, in adults, expression is higher in the head than in the body (at protein level).

The protein localises to the apical cell membrane. It is found in the lateral cell membrane. The catalysed reaction is a CDP-1,2-diacyl-sn-glycerol + myo-inositol = a 1,2-diacyl-sn-glycero-3-phospho-(1D-myo-inositol) + CMP + H(+). Functionally, catalyzes the biosynthesis of phosphatidylinositol (PtdIns) as well as PtdIns:inositol exchange reaction. May thus act to reduce an excessive cellular PtdIns content. The exchange activity is due to the reverse reaction of PtdIns synthase and is dependent on CMP, which is tightly bound to the enzyme. Required for the regeneration of the signaling molecule phosphatidylinositol 4,5-bisphosphate (PtdInsP2) from phosphatidic acid (PA) and maintenance of its steady supply during signaling, thus playing an essential role during phospholipase C-mediated transduction. This function is essential in photoreceptors for light-activated recycling of PtdInsP2 during phototransduction. As a key enzyme of the phosphoinositide pathway, indirectly involved in the polarized secretion of basal membrane (BM) proteins in follicle epithelial (FE) cells through promoting PtdInsP2 synthesis in the apical and lateral plasma membranes of FE cells. PtdInsP2 controls the localization of Crag and perhaps the localization and expression of strat, both of which are essential for restricting the secretion of BM proteins to the basal surface. The polypeptide is CDP-diacylglycerol--inositol 3-phosphatidyltransferase (Drosophila melanogaster (Fruit fly)).